The primary structure comprises 281 residues: Ras-related protein Rab-40C (281 aa).

Residues Ser-23, Gly-26, Lys-27, and Ser-46 each contribute to the GTP site. Positions 41 to 49 (SPYAYSNGI) are switch-I. Ser-46 and Asp-69 together coordinate Mg(2+). Residues Gly-72, Asn-126, and Arg-127 each contribute to the GTP site. Positions 72–88 (GQGRFCTIFRSYSRGAQ) are switch-II. Residues 175 to 228 (LMRHGMEKIWRPNRVFSLQDLCCRAIVSCTPVHLIDKLPLPVTIKSHLKSFSMA) enclose the SOCS box domain. A disordered region spans residues 245 to 281 (SGAGGGGSKGNSLKRSKSIRPPQSPPQNCSRSNCKIS). The segment covering 270–281 (PQNCSRSNCKIS) has biased composition (polar residues). Cys-273 carries the S-palmitoyl cysteine lipid modification. Residue Cys-278 is the site of S-geranylgeranyl cysteine attachment.

The protein belongs to the small GTPase superfamily. Rab family. Component of the cullin-5-RING E3 ubiquitin-protein ligase complex (ECS(RAB40C) complex) composed of CUL5, Elongin BC (ELOB and ELOC), RNF7/RBX2 and RAB40C. Interacts with protein phosphatase 6 (PP6) complex components ANKRD28, ANKRD52, PPP6C, PP6R1 and PP6R2; the interaction leads to ANKRD28 ubiquitination and decreased PP6 activity. Interacts with DAB2IP; DAB2IP acts as a GAP for RAB40C. The cofactor is Mg(2+).

It localises to the cell membrane. Its subcellular location is the cytoplasm. The protein resides in the cytosol. It is found in the golgi apparatus membrane. It carries out the reaction GTP + H2O = GDP + phosphate + H(+). The protein operates within protein modification; protein ubiquitination. With respect to regulation, regulated by guanine nucleotide exchange factors (GEFs) which promote the exchange of bound GDP for free GTP. Regulated by GTPase activating proteins (GAPs) including DAB2IP, which increase the GTP hydrolysis activity. Inhibited by GDP dissociation inhibitors (GDIs). RAB40C small GTPase acts as substrate-recognition component of the ECS(RAB40C) E3 ubiquitin ligase complex which mediates the ubiquitination and subsequent proteasomal degradation of target proteins. The Rab40 subfamily belongs to the Rab family that are key regulators of intracellular membrane trafficking, from the formation of transport vesicles to their fusion with membranes. Rabs cycle between an inactive GDP-bound form and an active GTP-bound form that is able to recruit to membranes different sets of downstream effectors directly responsible for vesicle formation, movement, tethering and fusion. As part of the ECS(RAB40C) complex, mediates ANKRD28 ubiquitination and degradation, thereby inhibiting protein phosphatase 6 (PP6) complex activity and focal adhesion assembly during cell migration. Also negatively regulate lipid droplets accumulation in a GTP-dependent manner. This chain is Ras-related protein Rab-40C, found in Homo sapiens (Human).